A 34-amino-acid polypeptide reads, in one-letter code: Mu-conotoxin GS (34 aa).

Intrachain disulfides connect C2–C14, C9–C19, and C13–C27. A 4-hydroxyproline mark is found at P10 and P11. E32 bears the 4-carboxyglutamate mark.

Expressed by the venom duct.

Its subcellular location is the secreted. Mu-conotoxins block voltage-gated sodium channels (Nav). No effect was observed upon injections into mice and goldfish (25 ug). This is Mu-conotoxin GS from Conus geographus (Geography cone).